We begin with the raw amino-acid sequence, 446 residues long: MKKIYIKTFGCQMNEYDSDKMADVLNAAEGLTPTSTPEDADVILFNTCSVREKAQEKVFHDLGRVRHLKQANPNLIIGVGGCVASQEGAAIVARAPFVDVVFGPQTLHRLPELIAQRRETGRAQVDISFPEIEKFDHLPPARVEGGAAFVSIMEGCSKYCTFCVVPYTRGEEVSRPFDDVIAEVANLAARGVKEITLLGQNVNAYQGALDEGGTADFAFLLEMVHEIPGVERIRYTTSHPREMTQRLIECYGKLPKLVSHLHLPVQSGSDRILAAMKRGHTVLEFKSIVRKLREQRSDLCLSSDFIVGFPGETGADFEATMKLVEELNFDASFSFIYSKRPGTPAADYADDVSAELKTQRLMRLQARIEAQAQGVNRSMVGSVQRVLVEGQARKNANELAGRTGNNRIVNFAGPSRLLGQFVDVTITQALPHSLRGEAVTLETLHT.

One can recognise an MTTase N-terminal domain in the interval 2–119 (KKIYIKTFGC…LPELIAQRRE (118 aa)). Cys-11, Cys-48, Cys-82, Cys-156, Cys-160, and Cys-163 together coordinate [4Fe-4S] cluster. The Radical SAM core domain occupies 142–376 (RVEGGAAFVS…RIEAQAQGVN (235 aa)). The 64-residue stretch at 377–440 (RSMVGSVQRV…PHSLRGEAVT (64 aa)) folds into the TRAM domain.

It belongs to the methylthiotransferase family. MiaB subfamily. As to quaternary structure, monomer. It depends on [4Fe-4S] cluster as a cofactor.

It localises to the cytoplasm. The catalysed reaction is N(6)-dimethylallyladenosine(37) in tRNA + (sulfur carrier)-SH + AH2 + 2 S-adenosyl-L-methionine = 2-methylsulfanyl-N(6)-dimethylallyladenosine(37) in tRNA + (sulfur carrier)-H + 5'-deoxyadenosine + L-methionine + A + S-adenosyl-L-homocysteine + 2 H(+). Functionally, catalyzes the methylthiolation of N6-(dimethylallyl)adenosine (i(6)A), leading to the formation of 2-methylthio-N6-(dimethylallyl)adenosine (ms(2)i(6)A) at position 37 in tRNAs that read codons beginning with uridine. The chain is tRNA-2-methylthio-N(6)-dimethylallyladenosine synthase from Thiobacillus denitrificans (strain ATCC 25259 / T1).